The chain runs to 302 residues: Elongation factor Ts (302 aa).

Positions 82-85 are involved in Mg(2+) ion dislocation from EF-Tu; that stretch reads TDFV.

Belongs to the EF-Ts family.

Its subcellular location is the cytoplasm. Functionally, associates with the EF-Tu.GDP complex and induces the exchange of GDP to GTP. It remains bound to the aminoacyl-tRNA.EF-Tu.GTP complex up to the GTP hydrolysis stage on the ribosome. This chain is Elongation factor Ts, found in Nitrosospira multiformis (strain ATCC 25196 / NCIMB 11849 / C 71).